Here is a 243-residue protein sequence, read N- to C-terminus: Phosphoribosyl isomerase A (243 aa).

D9 functions as the Proton acceptor in the catalytic mechanism. D128 functions as the Proton donor in the catalytic mechanism.

This sequence belongs to the HisA/HisF family.

It is found in the cytoplasm. The catalysed reaction is 1-(5-phospho-beta-D-ribosyl)-5-[(5-phospho-beta-D-ribosylamino)methylideneamino]imidazole-4-carboxamide = 5-[(5-phospho-1-deoxy-D-ribulos-1-ylimino)methylamino]-1-(5-phospho-beta-D-ribosyl)imidazole-4-carboxamide. It carries out the reaction N-(5-phospho-beta-D-ribosyl)anthranilate = 1-(2-carboxyphenylamino)-1-deoxy-D-ribulose 5-phosphate. The protein operates within amino-acid biosynthesis; L-histidine biosynthesis; L-histidine from 5-phospho-alpha-D-ribose 1-diphosphate: step 4/9. It functions in the pathway amino-acid biosynthesis; L-tryptophan biosynthesis; L-tryptophan from chorismate: step 3/5. In terms of biological role, involved in both the histidine and tryptophan biosynthetic pathways. The polypeptide is Phosphoribosyl isomerase A (Mycobacterium avium (strain 104)).